A 465-amino-acid chain; its full sequence is Adenosylhomocysteinase (465 aa).

Residues T56, D131, and E191 each coordinate substrate. 192–194 (TTT) contacts NAD(+). Substrate contacts are provided by K221 and D225. NAD(+)-binding positions include N226, 255-260 (GYGDVG), E278, N313, 334-336 (IGH), and N379.

Belongs to the adenosylhomocysteinase family. It depends on NAD(+) as a cofactor.

Its subcellular location is the cytoplasm. It catalyses the reaction S-adenosyl-L-homocysteine + H2O = L-homocysteine + adenosine. The protein operates within amino-acid biosynthesis; L-homocysteine biosynthesis; L-homocysteine from S-adenosyl-L-homocysteine: step 1/1. May play a key role in the regulation of the intracellular concentration of adenosylhomocysteine. This chain is Adenosylhomocysteinase, found in Chelativorans sp. (strain BNC1).